We begin with the raw amino-acid sequence, 237 residues long: Uridylate kinase (237 aa).

Position 11–14 (11–14) interacts with ATP; the sequence is KLSG. Position 53 (G53) interacts with UMP. 2 residues coordinate ATP: G54 and R58. UMP contacts are provided by residues D73 and 134–141; that span reads TGNPFFTT. Residues T161, Y167, and D170 each contribute to the ATP site.

This sequence belongs to the UMP kinase family. In terms of assembly, homohexamer.

It is found in the cytoplasm. It carries out the reaction UMP + ATP = UDP + ADP. It participates in pyrimidine metabolism; CTP biosynthesis via de novo pathway; UDP from UMP (UMPK route): step 1/1. Its activity is regulated as follows. Inhibited by UTP. Its function is as follows. Catalyzes the reversible phosphorylation of UMP to UDP. This Nitrosomonas eutropha (strain DSM 101675 / C91 / Nm57) protein is Uridylate kinase.